The primary structure comprises 68 residues: UPF0291 protein TTE2340 (68 aa).

It belongs to the UPF0291 family.

Its subcellular location is the cytoplasm. The chain is UPF0291 protein TTE2340 from Caldanaerobacter subterraneus subsp. tengcongensis (strain DSM 15242 / JCM 11007 / NBRC 100824 / MB4) (Thermoanaerobacter tengcongensis).